Consider the following 104-residue polypeptide: MYAIVEIQGQQFKVEKDQKLYVNHFEAKEGVPIIFNKVLLVDNDGFITIGNPLIKGAKVEVSILRSLVKGDKILVFHKKRRKGYRKLNGHRQQFSQILIRNILI.

The protein belongs to the bacterial ribosomal protein bL21 family. Part of the 50S ribosomal subunit. Contacts protein L20.

Functionally, this protein binds to 23S rRNA in the presence of protein L20. This chain is Large ribosomal subunit protein bL21, found in Azobacteroides pseudotrichonymphae genomovar. CFP2.